The sequence spans 363 residues: Melanoma-associated antigen B16 (363 aa).

The disordered stretch occupies residues Glu33–Pro124. A compositionally biased stretch (low complexity) spans Ala82 to Glu97. Residues Val128–Ala327 enclose the MAGE domain. Positions His342–Val363 are disordered.

This chain is Melanoma-associated antigen B16 (Mageb16), found in Mus musculus (Mouse).